The following is a 123-amino-acid chain: Probable ketoamine kinase in tonB 3'region (123 aa).

The active-site Proton acceptor is the D26.

Belongs to the fructosamine kinase family.

Ketoamine kinase that phosphorylates ketoamines on the third carbon of the sugar moiety to generate ketoamine 3-phosphate. In Klebsiella pneumoniae, this protein is Probable ketoamine kinase in tonB 3'region.